The primary structure comprises 156 residues: Type IV major fimbrial protein FimA (156 aa).

Residues 1 to 7 (MKSLQKG) constitute a propeptide, leader sequence. Phenylalanine 8 carries the post-translational modification N-methylphenylalanine. The helical transmembrane segment at 8–28 (FTLIELMIVVAIIGILAAIAI) threads the bilayer. Intrachain disulfides connect cysteine 57–cysteine 67 and cysteine 140–cysteine 153.

This sequence belongs to the N-Me-Phe pilin family. As to quaternary structure, the pili are polar flexible filaments of about 5.4 nanometers diameter and 2.5 micrometers average length; they consist of only a single polypeptide chain arranged in a helical configuration of five subunits per turn in the assembled pilus.

The protein localises to the fimbrium. It is found in the membrane. Its function is as follows. Major component of the type IV fimbriae that plays an essential role in twitching motility, natural transformation, and protease secretion. This Dichelobacter nodosus (Bacteroides nodosus) protein is Type IV major fimbrial protein FimA (fimA).